The following is a 274-amino-acid chain: SPbeta prophage-derived uncharacterized protein YomD (274 aa).

The polypeptide is SPbeta prophage-derived uncharacterized protein YomD (yomD) (Bacillus subtilis (strain 168)).